A 165-amino-acid polypeptide reads, in one-letter code: UPF0303 protein Bcep18194_A4700 (165 aa).

The protein belongs to the UPF0303 family.

In Burkholderia lata (strain ATCC 17760 / DSM 23089 / LMG 22485 / NCIMB 9086 / R18194 / 383), this protein is UPF0303 protein Bcep18194_A4700.